The chain runs to 185 residues: Adenine phosphoribosyltransferase (185 aa).

This sequence belongs to the purine/pyrimidine phosphoribosyltransferase family. Homodimer.

It localises to the cytoplasm. The enzyme catalyses AMP + diphosphate = 5-phospho-alpha-D-ribose 1-diphosphate + adenine. The protein operates within purine metabolism; AMP biosynthesis via salvage pathway; AMP from adenine: step 1/1. Its function is as follows. Catalyzes a salvage reaction resulting in the formation of AMP, that is energically less costly than de novo synthesis. The sequence is that of Adenine phosphoribosyltransferase from Pectobacterium atrosepticum (strain SCRI 1043 / ATCC BAA-672) (Erwinia carotovora subsp. atroseptica).